The chain runs to 291 residues: MDARAINSREKADLKYPRNTYIIGDVQGCYRELQELLELIQFDSTKDRLGFVGDLVNRGPNSLEVLRFLKSLSSPLIVLGNHDLYLLILGYGLMPEDSYEHTLHAVLQAPDKLELLEWLRHSPLIRYEKSLSAVLVHAGLPPQWNIKESILHAEEISTALKGPHYLAFLKNLFGNEPSQWKEDLEGQDRLRYICNAFTRMRFCDAKGHLDLESEGKTNQAPSRFRPWFEWRNPQEDNVDIVFGHWAALNGQSSAPHTHALDTGCAWGYKLTAINLKTKERFSVPCQSALRM.

Belongs to the Ap4A hydrolase family.

It carries out the reaction P(1),P(4)-bis(5'-adenosyl) tetraphosphate + H2O = 2 ADP + 2 H(+). Its function is as follows. Hydrolyzes diadenosine 5',5'''-P1,P4-tetraphosphate to yield ADP. The chain is Bis(5'-nucleosyl)-tetraphosphatase, symmetrical from Coxiella burnetii (strain RSA 331 / Henzerling II).